The chain runs to 589 residues: Arginine--tRNA ligase (589 aa).

Residues 131–141 (ANPTGPLHVGH) carry the 'HIGH' region motif.

The protein belongs to the class-I aminoacyl-tRNA synthetase family. Monomer.

The protein localises to the cytoplasm. It carries out the reaction tRNA(Arg) + L-arginine + ATP = L-arginyl-tRNA(Arg) + AMP + diphosphate. In Legionella pneumophila subsp. pneumophila (strain Philadelphia 1 / ATCC 33152 / DSM 7513), this protein is Arginine--tRNA ligase.